A 383-amino-acid chain; its full sequence is MSATTTSASETSTPTCLPIPPKENGYVPPGGCGNIHMYEASFAAPVLFSVLFGLTTIIHIVQAIMFKKRYAWVVIMSSLWELIAFIMRSLFAKNQSSDAYNTPFTIFFLLAPIWVNAFLYMTLGRLIYFFLPSGRLGGIGAKRFGHIFVWLEILAFIIQLVGAAFTTDTEASQETIMRGVHIYMGGIGVQELFILIFTGLFIHLQRKMGEMERHGTLDAEKVGRGSMPWRWLFYAIYASLFLITVRIIFRLAQYADGTNIDNPALRNEWFEYVWDAAPIFICLAILNVAHPGRVLVGPDSEFPRVSRKEKKQRKREKKEAKIAEKEAKKERKRRRKHGSIGVDLLDAQERGSAPTSRPAPGGHGYQGENQRTWYDNRGNEVRP.

Helical transmembrane passes span Val46–Phe66 and Ala71–Phe91. An N-linked (GlcNAc...) asparagine glycan is attached at Asn94. The next 5 membrane-spanning stretches (helical) occupy residues Phe104–Gly124, Phe144–Ala164, Ile182–Ile202, Trp231–Leu251, and Trp269–Ala289. The interval Val305–Pro383 is disordered. Over residues Arg307–Glu316 the composition is skewed to basic residues. The segment covering Lys317–Lys329 has biased composition (basic and acidic residues).

Belongs to the lipid-translocating exporter (LTE) (TC 9.A.26.1) family.

It is found in the membrane. The protein operates within secondary metabolite biosynthesis. Its function is as follows. Probable lipid transporter; part of the gene cluster that mediates the biosynthesis of aspercryptins, linear lipopeptides built from six amino acids including 2 highly unusual and nonproteogenic amino acids, 2-amino-octanoic acid (2aoa) and 2-amino-dodecanol (2adol). The core structure of aspercryptins is as follows: Ser/Ala-Thr-Ile/Val-2aoa-Asn-2adol. The first step of aspercryptin biosynthesis is the generation of the fatty acid precursors, octanoic and dodecanoic acids, by the FAS subunits atnF and atnM. The fatty acid precursors are likely transformed into the corresponding alpha-amino fatty acids in three steps. First, they are hydroxylated by the cytochrome P450 monooxygenase atnE, then oxidized to the corresponding alpha-keto acids by the NAD(P)-dependent oxidoreductase atnD, and finally converted to the alpha-amino fatty acids by the PLP-dependent aminotransferases atnH or atnJ. the alpha-amino fatty acids, 2-amino-octanoic and 2-amino-dodecanoic acids, are recognized, activated, and covalently tethered to the NRPS atnA by its fourth and sixth adenylation domains. The second module of atnA is the Thr module and contains an epimerase (E) domain responsible for the epimerization of Thr to D-allo-Thr. Additionally, despite atnA having only one epimerase domain, the first amino acid of aspercryptin A1 is D-Ser, suggesting that serine is either loaded directly as D-Ser on the first module or that the epimerase domain in the threonine module epimerizes both L-Ser and L-Thr. After condensation of the hexapeptide of aspercryptin, the C-terminal reductase (TE) domain might be involved in the reductive release and production of the aldehyde hexapeptide. Further reduction would generate aspercryptins. The variety of aspercryptins produced reflects the flexibility of the atnA NRPS, allowing incorporation of alanine instead of serine, valine for isoleucine, and a C10 fatty amino alcohol instead of the C12 version. AtnB seems to be involved in the selectivity for Ile versus Val by the third module. Moreover, type B, C and D aspercryptins have an additional N-terminal cichorine, acetyl and propionyl group respectively. This is Probable lipid transporter atnI from Emericella nidulans (strain FGSC A4 / ATCC 38163 / CBS 112.46 / NRRL 194 / M139) (Aspergillus nidulans).